A 205-amino-acid chain; its full sequence is NADH-quinone oxidoreductase subunit J (205 aa).

The next 5 helical transmembrane spans lie at methionine 1 to leucine 21, valine 26 to leucine 46, methionine 54 to leucine 74, leucine 89 to leucine 109, and phenylalanine 142 to threonine 162.

The protein belongs to the complex I subunit 6 family.

It is found in the cell membrane. It catalyses the reaction a quinone + NADH + 5 H(+)(in) = a quinol + NAD(+) + 4 H(+)(out). In terms of biological role, NDH-1 shuttles electrons from NADH, via FMN and iron-sulfur (Fe-S) centers, to quinones in the respiratory chain. Couples the redox reaction to proton translocation (for every two electrons transferred, four hydrogen ions are translocated across the cytoplasmic membrane), and thus conserves the redox energy in a proton gradient. This is NADH-quinone oxidoreductase subunit J (nuoJ) from Rickettsia conorii (strain ATCC VR-613 / Malish 7).